The chain runs to 648 residues: Spike protein P3 (648 aa).

As to quaternary structure, interacts with P6.

The protein resides in the virion membrane. P3 protein is necessary for adsorption onto host cells. Attaches to a type IV pilus of the host. The sequence is that of Spike protein P3 (P3) from Pseudomonas savastanoi pv. phaseolicola (Pseudomonas syringae pv. phaseolicola).